A 261-amino-acid polypeptide reads, in one-letter code: MASQLQNRLRSALALVTGAGSGIGRAVSVRLAGEGATVAACDLDRAAAQETVRLLGGPGSKEGPPRGNHAAFQADVSEARAARCLLEQVQACFSRPPSVVVSCAGITQDEFLLHMSEDDWDKVIAVNLKGTFLVTQAAAQALVSNGCRGSIINISSIVGKVGNVGQTNYAASKAGVIGLTQTAARELGRHGIRCNSVLPGFIATPMTQKVPQKVVDKITEMIPMGHLGDPEDVADVVAFLASEDSGYITGTSVEVTGGLFM.

Residues 15-23 (LVTGAGSGI) and 42-43 (DL) each bind NAD(+). Serine 60 is modified (phosphoserine). 74–76 (ADV) contacts NAD(+). Substrate is bound at residue serine 156. Position 160 is an N6-succinyllysine (lysine 160). The active-site Proton acceptor is tyrosine 169. NAD(+) is bound by residues 169–173 (YAASK) and 202–204 (IAT). Position 173 is an N6-succinyllysine (lysine 173).

This sequence belongs to the short-chain dehydrogenases/reductases (SDR) family. As to quaternary structure, heterotetramer with CBR4; contains two molecules of HSD17B8 and CBR4. As to expression, widely expressed, particularly abundant in prostate, placenta and kidney. Expressed at protein level in various tissues like brain, cerebellum, heart, lung, kidney, ovary, testis, adrenals and prostate.

The protein resides in the mitochondrion matrix. The catalysed reaction is a (3R)-3-hydroxyacyl-CoA + NAD(+) = a 3-oxoacyl-CoA + NADH + H(+). It carries out the reaction 17beta-estradiol + NAD(+) = estrone + NADH + H(+). It catalyses the reaction testosterone + NAD(+) = androst-4-ene-3,17-dione + NADH + H(+). The enzyme catalyses 17beta-hydroxy-5alpha-androstan-3-one + NAD(+) = 5alpha-androstan-3,17-dione + NADH + H(+). Its pathway is steroid biosynthesis; estrogen biosynthesis. It functions in the pathway lipid metabolism; fatty acid biosynthesis. The protein operates within lipid metabolism; mitochondrial fatty acid beta-oxidation. Its function is as follows. Required for the solubility and assembly of the heterotetramer 3-ketoacyl-[acyl carrier protein] (ACP) reductase functional complex (KAR or KAR1) that forms part of the mitochondrial fatty acid synthase (mtFAS). Alpha-subunit of the KAR complex that acts as a scaffold protein required for the stability of carbonyl reductase type-4 (CBR4, beta-subunit of the KAR complex) and for its 3-ketoacyl-ACP reductase activity, thereby participating in mitochondrial fatty acid biosynthesis. Catalyzes the NAD-dependent conversion of (3R)-3-hydroxyacyl-CoA into 3-ketoacyl-CoA (3-oxoacyl-CoA) with no chain length preference; this enzymatic activity is not needed for the KAR function. Prefers (3R)-3-hydroxyacyl-CoA over (3S)-3-hydroxyacyl-CoA and displays enzymatic activity only in the presence of NAD(+). Cooperates with enoyl-CoA hydratase 1 in mitochondria, together they constitute an alternative route to the auxiliary enzyme pathways for the breakdown of Z-PUFA (cis polyunsaturated fatty acid) enoyl-esters. NAD-dependent 17-beta-hydroxysteroid dehydrogenase with highest activity towards estradiol (17beta-estradiol or E2). Has very low activity towards testosterone and dihydrotestosterone (17beta-hydroxy-5alpha-androstan-3-one). Primarily an oxidative enzyme, it can switch to a reductive mode determined in the appropriate physiologic milieu and catalyze the reduction of estrone (E1) to form biologically active 17beta-estradiol. This Homo sapiens (Human) protein is (3R)-3-hydroxyacyl-CoA dehydrogenase (HSD17B8).